We begin with the raw amino-acid sequence, 356 residues long: Protein-glutamate methylesterase/protein-glutamine glutaminase 4 (356 aa).

Residues 15 to 132 (RVLVVDDSAV…SVGEMTADLV (118 aa)) enclose the Response regulatory domain. D66 carries the post-translational modification 4-aspartylphosphate. The 187-residue stretch at 162–348 (ARTTLQVVAI…PLDRIAPEIL (187 aa)) folds into the CheB-type methylesterase domain. Residues S174, H200, and D296 contribute to the active site.

It belongs to the CheB family. Post-translationally, phosphorylated by CheA. Phosphorylation of the N-terminal regulatory domain activates the methylesterase activity.

Its subcellular location is the cytoplasm. It carries out the reaction [protein]-L-glutamate 5-O-methyl ester + H2O = L-glutamyl-[protein] + methanol + H(+). The enzyme catalyses L-glutaminyl-[protein] + H2O = L-glutamyl-[protein] + NH4(+). Its function is as follows. Involved in chemotaxis. Part of a chemotaxis signal transduction system that modulates chemotaxis in response to various stimuli. Catalyzes the demethylation of specific methylglutamate residues introduced into the chemoreceptors (methyl-accepting chemotaxis proteins or MCP) by CheR. Also mediates the irreversible deamidation of specific glutamine residues to glutamic acid. This chain is Protein-glutamate methylesterase/protein-glutamine glutaminase 4, found in Anaeromyxobacter dehalogenans (strain 2CP-C).